We begin with the raw amino-acid sequence, 268 residues long: Basic endochitinase CHB4 (268 aa).

The signal sequence occupies residues 1-24 (MALTKLSLVLFLCFLGLYSETVKS). A Chitin-binding type-1 domain is found at 25–59 (QNCGCAPNLCCSQFGYCGSTDAYCGTGCRSGPCRS). Disulfide bonds link Cys27–Cys35, Cys29–Cys41, Cys34–Cys48, Cys52–Cys57, Cys92–Cys137, Cys150–Cys159, and Cys236–Cys268. The tract at residues 71-268 (SVGSIVTQAF…GVDPGPNLSC (198 aa)) is catalytic. Glu132 acts as the Proton donor in catalysis. A glycan (N-linked (GlcNAc...) asparagine) is linked at Asn265.

It belongs to the glycosyl hydrolase 19 family. Chitinase class I subfamily.

The protein resides in the secreted. It localises to the extracellular space. It catalyses the reaction Random endo-hydrolysis of N-acetyl-beta-D-glucosaminide (1-&gt;4)-beta-linkages in chitin and chitodextrins.. Functionally, defense against chitin-containing fungal pathogens. This chain is Basic endochitinase CHB4, found in Brassica napus (Rape).